A 980-amino-acid chain; its full sequence is Peroxisomal ATPase PEX6 (980 aa).

Position 119 is an omega-N-methylarginine (Arg-119). Residues 470 to 477 (GPPGCGKT) and 744 to 751 (GPPGTGKT) each bind ATP.

This sequence belongs to the AAA ATPase family. As to quaternary structure, interacts with PEX1; forming the PEX1-PEX6 AAA ATPase complex, which is composed of a heterohexamer formed by a trimer of PEX1-PEX6 dimers. Interacts with PEX26; interaction is direct and promotes recruitment to peroxisomal membranes. Interacts with ZFAND6. As to expression, expressed in the retina, at higher levels in the photoreceptor layer at the joint between the outer and inner segments.

The protein resides in the cytoplasm. The protein localises to the cytosol. It localises to the peroxisome membrane. It is found in the cell projection. Its subcellular location is the cilium. The protein resides in the photoreceptor outer segment. The catalysed reaction is ATP + H2O = ADP + phosphate + H(+). Its function is as follows. Component of the PEX1-PEX6 AAA ATPase complex, a protein dislocase complex that mediates the ATP-dependent extraction of the PEX5 receptor from peroxisomal membranes, an essential step for PEX5 recycling. Specifically recognizes PEX5 monoubiquitinated at 'Cys-11', and pulls it out of the peroxisome lumen through the PEX2-PEX10-PEX12 retrotranslocation channel. Extraction by the PEX1-PEX6 AAA ATPase complex is accompanied by unfolding of the TPR repeats and release of bound cargo from PEX5. This is Peroxisomal ATPase PEX6 from Homo sapiens (Human).